A 75-amino-acid chain; its full sequence is Putative DNA-directed RNA polymerase subunit omega (75 aa).

It belongs to the RNA polymerase subunit omega family.

Its subcellular location is the plastid. The protein resides in the chloroplast. It carries out the reaction RNA(n) + a ribonucleoside 5'-triphosphate = RNA(n+1) + diphosphate. Its function is as follows. May be involved in RNA polymerase activity. The sequence is that of Putative DNA-directed RNA polymerase subunit omega from Pyropia yezoensis (Susabi-nori).